Here is a 325-residue protein sequence, read N- to C-terminus: tRNA pseudouridine synthase B (325 aa).

Residue Asp-49 is the Nucleophile of the active site.

It belongs to the pseudouridine synthase TruB family. Type 1 subfamily.

It catalyses the reaction uridine(55) in tRNA = pseudouridine(55) in tRNA. Its function is as follows. Responsible for synthesis of pseudouridine from uracil-55 in the psi GC loop of transfer RNAs. This Mesorhizobium japonicum (strain LMG 29417 / CECT 9101 / MAFF 303099) (Mesorhizobium loti (strain MAFF 303099)) protein is tRNA pseudouridine synthase B.